Reading from the N-terminus, the 630-residue chain is Glutathione hydrolase proenzyme 1 (630 aa).

At Met-1–Ser-49 the chain is on the cytoplasmic side. The chain crosses the membrane as a helical; Signal-anchor for type II membrane protein span at residues Ile-50–Leu-70. Topologically, residues Ser-71–Tyr-630 are lumenal. Asn-156 carries an N-linked (GlcNAc...) asparagine glycan. L-glutamate is bound at residue Arg-165. N-linked (GlcNAc...) asparagine glycosylation is found at Asn-180, Asn-315, Asn-397, and Asn-417. The Nucleophile role is filled by Thr-441. L-glutamate is bound by residues Ser-459, Asn-461, Asp-483, Ser-511–Ser-512, and Gly-532–Gly-533. Residue Asn-612 is glycosylated (N-linked (GlcNAc...) asparagine).

This sequence belongs to the gamma-glutamyltransferase family. In terms of assembly, heterodimer composed of the light and heavy chains. The active site is located in the light chain. Post-translationally, cleaved by autocatalysis into a large and a small subunit.

Its subcellular location is the endoplasmic reticulum membrane. It carries out the reaction an N-terminal (5-L-glutamyl)-[peptide] + an alpha-amino acid = 5-L-glutamyl amino acid + an N-terminal L-alpha-aminoacyl-[peptide]. The enzyme catalyses glutathione + H2O = L-cysteinylglycine + L-glutamate. The catalysed reaction is an S-substituted glutathione + H2O = an S-substituted L-cysteinylglycine + L-glutamate. The protein operates within sulfur metabolism; glutathione metabolism. Functionally, catalyzes the transfer of the gamma-glutamyl moiety of glutathione (GSH) and other gamma-glutamyl compounds to amino acids and peptides. Major GSH-degrading enzyme, catalyzing the hydrolytic release of L-glutamate from GSH. This Schizosaccharomyces pombe (strain 972 / ATCC 24843) (Fission yeast) protein is Glutathione hydrolase proenzyme 1 (ggt1).